The sequence spans 423 residues: Tegument protein UL43 (423 aa).

The segment covering 1–12 has biased composition (polar residues); sequence MEKTPAETTAVS. Residues 1–46 form a disordered region; sequence MEKTPAETTAVSAGNVPRDSIPCITNVSADTRGRTRPSRPATVPQR.

It belongs to the herpesviridae US22 family.

The protein resides in the virion tegument. This is Tegument protein UL43 (UL43) from Homo sapiens (Human).